The chain runs to 241 residues: Uridylate kinase (241 aa).

ATP is bound at residue Lys-12–Gly-15. The tract at residues Gly-20–Gly-25 is involved in allosteric activation by GTP. Gly-54 contacts UMP. 2 residues coordinate ATP: Gly-55 and Arg-59. Residues Asp-74 and Thr-135–Thr-142 each bind UMP. Residues Asn-163, Tyr-169, and Asp-172 each contribute to the ATP site.

This sequence belongs to the UMP kinase family. Homohexamer.

Its subcellular location is the cytoplasm. The catalysed reaction is UMP + ATP = UDP + ADP. It participates in pyrimidine metabolism; CTP biosynthesis via de novo pathway; UDP from UMP (UMPK route): step 1/1. Allosterically activated by GTP. Inhibited by UTP. Functionally, catalyzes the reversible phosphorylation of UMP to UDP. The protein is Uridylate kinase of Lactobacillus johnsonii (strain CNCM I-12250 / La1 / NCC 533).